Reading from the N-terminus, the 228-residue chain is L-ribulose-5-phosphate 4-epimerase UlaF (228 aa).

Substrate is bound by residues 26 to 27 (GN), 43 to 44 (SG), and 72 to 73 (SS). The Zn(2+) site is built by aspartate 74, histidine 93, and histidine 95. Aspartate 118 functions as the Proton donor/acceptor in the catalytic mechanism. Zn(2+) is bound at residue histidine 167. Tyrosine 225 (proton donor/acceptor) is an active-site residue.

The protein belongs to the aldolase class II family. AraD/FucA subfamily. Zn(2+) is required as a cofactor.

It catalyses the reaction L-ribulose 5-phosphate = D-xylulose 5-phosphate. Its pathway is cofactor degradation; L-ascorbate degradation; D-xylulose 5-phosphate from L-ascorbate: step 4/4. Its function is as follows. Catalyzes the isomerization of L-ribulose 5-phosphate to D-xylulose 5-phosphate. Is involved in the anaerobic L-ascorbate utilization. The polypeptide is L-ribulose-5-phosphate 4-epimerase UlaF (Escherichia coli (strain SMS-3-5 / SECEC)).